The following is a 495-amino-acid chain: UDP-N-acetylmuramate--L-alanine ligase (495 aa).

Position 122–128 (122–128 (GTHGKTT)) interacts with ATP.

Belongs to the MurCDEF family.

The protein resides in the cytoplasm. The catalysed reaction is UDP-N-acetyl-alpha-D-muramate + L-alanine + ATP = UDP-N-acetyl-alpha-D-muramoyl-L-alanine + ADP + phosphate + H(+). It functions in the pathway cell wall biogenesis; peptidoglycan biosynthesis. Functionally, cell wall formation. The chain is UDP-N-acetylmuramate--L-alanine ligase from Mycobacterium leprae (strain TN).